A 358-amino-acid chain; its full sequence is Porphobilinogen deaminase, chloroplastic (358 aa).

Positions 1–24 are cleaved as a signal peptide; that stretch reads MPPPPRCAATTAHHSLLGSPTCLA. The residue at position 290 (cysteine 290) is an S-(dipyrrolylmethanemethyl)cysteine.

The protein belongs to the HMBS family. The cofactor is dipyrromethane.

The protein resides in the plastid. The protein localises to the chloroplast. It catalyses the reaction 4 porphobilinogen + H2O = hydroxymethylbilane + 4 NH4(+). It functions in the pathway porphyrin-containing compound metabolism; protoporphyrin-IX biosynthesis; coproporphyrinogen-III from 5-aminolevulinate: step 2/4. It participates in porphyrin-containing compound metabolism; chlorophyll biosynthesis. Its function is as follows. Tetrapolymerization of the monopyrrole PBG into the hydroxymethylbilane pre-uroporphyrinogen in several discrete steps. This Oryza sativa subsp. japonica (Rice) protein is Porphobilinogen deaminase, chloroplastic (HEMC).